Reading from the N-terminus, the 242-residue chain is Lysosomal membrane ascorbate-dependent ferrireductase CYB561A3 (242 aa).

The Cytoplasmic segment spans residues 1–4 (MASG). A helical transmembrane segment spans residues 5-25 (WFYLSCMVLGSLGSMCILFTA). A Cytochrome b561 domain is found at 12-219 (VLGSLGSMCI…FGLLVLYVLL (208 aa)). Residues 26–40 (YWMQYWRGGFAWDGT) are Lumenal-facing. Residues 41–61 (VLMFNWHPVLMVAGMVVLYGA) traverse the membrane as a helical segment. Heme b is bound by residues H47 and R67. The Cytoplasmic segment spans residues 62-81 (ASLVYRLPSSWVGPRLPWKV). The L-ascorbate site is built by R76 and K80. Residues 82-102 (LHAALHLLAFTCTVVGLIAVF) traverse the membrane as a helical segment. Heme b is bound by residues H83, 112–115 (HLYS), and H117. Residues 103-119 (RFHNHSRIAHLYSLHSW) are Lumenal-facing. A helical transmembrane segment spans residues 120–140 (LGITTVVLFACQWFLGFAVFL). The Cytoplasmic segment spans residues 141 to 154 (LPWASQWLRSLLKP). Residue R149 coordinates L-ascorbate. Residues 155 to 175 (LHVFFGACILSLSITSVISGI) traverse the membrane as a helical segment. Heme b is bound by residues H156 and E177. Residues 176–202 (NEKLFFVLKNATKPYSSLPGEAVFANS) are Lumenal-facing. The helical transmembrane segment at 203-223 (TGLLVVAFGLLVLYVLLASSW) threads the bilayer. Position 224 (K224) interacts with heme b. The Cytoplasmic portion of the chain corresponds to 224–242 (KRPDPGALTDRQPLLHDRE).

As to quaternary structure, homodimer. Heme b serves as cofactor. In terms of processing, N-glycosylated. Present in lung, spleen, thymus and testis. Present at low level in brain, heart, liver and kidney. Expressed in the alveolar macrophages of the lung, in the white pulp of the spleen, widespread in the thymus, and in the Sertoli cells of the testis (at protein level).

It localises to the late endosome membrane. The protein localises to the lysosome membrane. It carries out the reaction Fe(3+)(out) + L-ascorbate(in) = monodehydro-L-ascorbate radical(in) + Fe(2+)(out) + H(+). Its function is as follows. Transmembrane reductase that uses ascorbate as an electron donor in the cytoplasm and transfers electrons across membranes to reduce iron cations Fe(3+) into Fe(2+) in the lumen of the late endosome and lysosome. Reduced iron can then be extruded from the late endosome and lysosome to the cytoplasm by divalent metal-specific transporters. It is therefore most probably involved in endosomal and lysosomal cellular iron homeostasis. This chain is Lysosomal membrane ascorbate-dependent ferrireductase CYB561A3, found in Mus musculus (Mouse).